Reading from the N-terminus, the 641-residue chain is 1-deoxy-D-xylulose-5-phosphate synthase (641 aa).

Residues His-71 and 112-114 (SHA) contribute to the thiamine diphosphate site. Asp-144 is a binding site for Mg(2+). Thiamine diphosphate is bound by residues 145–146 (GA), Asn-173, Tyr-284, and Glu-365. Asn-173 serves as a coordination point for Mg(2+).

This sequence belongs to the transketolase family. DXPS subfamily. As to quaternary structure, homodimer. Mg(2+) serves as cofactor. The cofactor is thiamine diphosphate.

It carries out the reaction D-glyceraldehyde 3-phosphate + pyruvate + H(+) = 1-deoxy-D-xylulose 5-phosphate + CO2. Its pathway is metabolic intermediate biosynthesis; 1-deoxy-D-xylulose 5-phosphate biosynthesis; 1-deoxy-D-xylulose 5-phosphate from D-glyceraldehyde 3-phosphate and pyruvate: step 1/1. In terms of biological role, catalyzes the acyloin condensation reaction between C atoms 2 and 3 of pyruvate and glyceraldehyde 3-phosphate to yield 1-deoxy-D-xylulose-5-phosphate (DXP). This is 1-deoxy-D-xylulose-5-phosphate synthase from Mycobacterium avium (strain 104).